The chain runs to 270 residues: MTMSFAANRARGEIRVRYEKHGGITRPLRLFETGGLRLRHPRAFQGCVGMIVNSAGGIAGGDHLRLAIEAEEQSELVIATPAAEKIYRARDKAAMLDLSLVLAPETKLAFLPQETILFDGAALSRRLDVTMANDASLLLVETLVLGRLAHGESAISCDFRDSWRIRRGGRLVFAEESRIEGPLNRTFDQPSLGHGRRAMAFLLAVAPDAEARLESLRARLAPFEPACPHGVSAWNGMLVARLMAASPEVLRCALLAGLGLWRDDIARLWL.

Belongs to the UreD family. As to quaternary structure, ureD, UreF and UreG form a complex that acts as a GTP-hydrolysis-dependent molecular chaperone, activating the urease apoprotein by helping to assemble the nickel containing metallocenter of UreC. The UreE protein probably delivers the nickel.

Its subcellular location is the cytoplasm. In terms of biological role, required for maturation of urease via the functional incorporation of the urease nickel metallocenter. In Beijerinckia indica subsp. indica (strain ATCC 9039 / DSM 1715 / NCIMB 8712), this protein is Urease accessory protein UreD.